Here is a 20-residue protein sequence, read N- to C-terminus: Cytotoxin drCT-1 (20 aa).

The protein belongs to the three-finger toxin family. Short-chain subfamily. Type IA cytotoxin sub-subfamily. As to quaternary structure, monomer in solution; Homodimer and oligomer in the presence of negatively charged lipids forming a pore with a size ranging between 20 and 30 Angstroms. Expressed by the venom gland.

The protein localises to the secreted. It is found in the target cell membrane. Functionally, this three-finger cytotoxin has antiproliferative, cytotoxic and apoptotic activities. Both in vivo and in vitro experimental results suggests that this protein possess anticancer potential. Also shows neurotoxicity, cardiotoxicity and myotoxicity. The sequence is that of Cytotoxin drCT-1 from Daboia russelii (Russel's viper).